We begin with the raw amino-acid sequence, 293 residues long: Release factor glutamine methyltransferase (293 aa).

Residues 130–134 (GTGSG), D153, W182, and N199 contribute to the S-adenosyl-L-methionine site. 199 to 202 (NPPY) is a substrate binding site.

The protein belongs to the protein N5-glutamine methyltransferase family. PrmC subfamily.

The enzyme catalyses L-glutaminyl-[peptide chain release factor] + S-adenosyl-L-methionine = N(5)-methyl-L-glutaminyl-[peptide chain release factor] + S-adenosyl-L-homocysteine + H(+). Methylates the class 1 translation termination release factors RF1/PrfA and RF2/PrfB on the glutamine residue of the universally conserved GGQ motif. This Prochlorococcus marinus (strain SARG / CCMP1375 / SS120) protein is Release factor glutamine methyltransferase.